Consider the following 1043-residue polypeptide: Non-canonical nonribosomal peptide synthetase cpsA (1043 aa).

An adenylation (A) domain region spans residues 41 to 386 (RRAQENPSAP…IGGDGVSPGY (346 aa)). Positions 549 to 626 (QDASTTISRL…QMARYVDEGG (78 aa)) constitute a Carrier domain. Residue Ser586 is modified to O-(pantetheine 4'-phosphoryl)serine. Residues 671-914 (MTGATGFVGA…FVPVDYLVDA (244 aa)) are short-chain dehydrogenase/reductase (R) domain. The region spanning 672–915 (TGATGFVGAF…VPVDYLVDAI (244 aa)) is the Thioester reductase (TE) domain.

Belongs to the NRP synthetase family. The cofactor is pantetheine 4'-phosphate.

It carries out the reaction L-valine + ATP + NADPH + H(+) = L-valinal + AMP + diphosphate + NADP(+). The catalysed reaction is L-tryptophan + ATP + NADPH + H(+) = L-tryptophanal + AMP + diphosphate + NADP(+). Its pathway is alkaloid biosynthesis. Functionally, non-canonical nonribosomal peptide synthetase; part of the gene cluster that mediates the biosynthesis of campesine G, a dimeric indole piperazine alkaloid that shows good insecticidal activity Galleria mellonella. CpsA catalyzes the first steps of the pathway by producing L-tryptophanal and L-valinal from their respective amino-acids. These products condensate spontaneously to form trypyl-valyl pyrazine also known as didehydrocampesine A. The NmrA-like family domain-containing oxidoreductase cpsB is the next enzyme in cps pathway and reduces the unstable didehydrocampesine A to campesine A. The methyltransferase cpsF and the acetyltransferase cpsE both recognize N13 of piperazine ring to carry out methylation and acetylation of campesine A to produce campesine C and B, respectively. The cytochrome P450 monooxygenase cpsD then acts as a dimerase that catalyzes oxidative heterocoupling between campesine B and C to produce heterodimers with unexpected 6/5/6/6/6/6/5/6 eight-ring scaffold called campesine D. Finally,the cytochrome P450 monooxygenase cpsC is a regioselective dehydrogenase that catalyzes dehydrogenation reaction towards C2-N1 to produce campesine G. This Aspergillus campestris (strain IBT 28561) protein is Non-canonical nonribosomal peptide synthetase cpsA.